The sequence spans 175 residues: Large ribosomal subunit protein uL10 (175 aa).

Belongs to the universal ribosomal protein uL10 family. Part of the ribosomal stalk of the 50S ribosomal subunit. The N-terminus interacts with L11 and the large rRNA to form the base of the stalk. The C-terminus forms an elongated spine to which L12 dimers bind in a sequential fashion forming a multimeric L10(L12)X complex.

Its function is as follows. Forms part of the ribosomal stalk, playing a central role in the interaction of the ribosome with GTP-bound translation factors. This Synechococcus sp. (strain CC9902) protein is Large ribosomal subunit protein uL10.